A 70-amino-acid chain; its full sequence is U2-agatoxin-Ao1n (70 aa).

The N-terminal stretch at M1–A20 is a signal peptide. A propeptide spanning residues V21–R34 is cleaved from the precursor. 3 cysteine pairs are disulfide-bonded: C37-C53, C44-C58, and C52-C68. L69 bears the Leucine amide mark.

This sequence belongs to the neurotoxin 01 (U2-agtx) family. Expressed by the venom gland.

The protein resides in the secreted. Its function is as follows. Insect active toxin causing rapid but reversible paralysis in crickets. No activity shown in mammals. Does not show effect on mammalian voltage-gated calcium channels. This chain is U2-agatoxin-Ao1n, found in Agelena orientalis (Funnel-web spider).